Here is a 214-residue protein sequence, read N- to C-terminus: Large ribosomal subunit protein eL14 (214 aa).

Residue Lys-79 is modified to N6-acetyllysine. Lys-85 is subject to N6-acetyllysine; alternate. The residue at position 85 (Lys-85) is an N6-succinyllysine; alternate. Lys-124 is covalently cross-linked (Glycyl lysine isopeptide (Lys-Gly) (interchain with G-Cter in SUMO2)). At Ser-139 the chain carries Phosphoserine. The disordered stretch occupies residues 161–214 (PAKKITTEGKKAPAQKAPAQKAAGQKAAPPPKTQKGQKAPSQKAPAPKASGKKA). One copy of the 1-1; approximate repeat lies at 170 to 174 (KKAPA). A 4 X 5 AA tandem repeats of Q-K-A-[APS]-X region spans residues 170 to 189 (KKAPAQKAPAQKAAGQKAAP). Over residues 172-214 (APAQKAPAQKAAGQKAAPPPKTQKGQKAPSQKAPAPKASGKKA) the composition is skewed to low complexity. 5 consecutive repeat copies span residues 175–179 (QKAPA), 180–184 (QKAAG), 185–189 (QKAAP), 192–194 (KTQ), and 195–197 (KGQ). Residues 192-197 (KTQKGQ) form a 2 X 3 AA tandem repeats of K-G-Q region. Lys-203 carries the post-translational modification N6-succinyllysine.

This sequence belongs to the eukaryotic ribosomal protein eL14 family. As to quaternary structure, component of the large ribosomal subunit.

The protein resides in the cytoplasm. Its function is as follows. Component of the large ribosomal subunit. The ribosome is a large ribonucleoprotein complex responsible for the synthesis of proteins in the cell. This is Large ribosomal subunit protein eL14 (RPL14) from Bos taurus (Bovine).